A 249-amino-acid chain; its full sequence is Imidazole glycerol phosphate synthase subunit HisF (249 aa).

Active-site residues include aspartate 11 and aspartate 130.

Belongs to the HisA/HisF family. In terms of assembly, heterodimer of HisH and HisF.

The protein localises to the cytoplasm. The catalysed reaction is 5-[(5-phospho-1-deoxy-D-ribulos-1-ylimino)methylamino]-1-(5-phospho-beta-D-ribosyl)imidazole-4-carboxamide + L-glutamine = D-erythro-1-(imidazol-4-yl)glycerol 3-phosphate + 5-amino-1-(5-phospho-beta-D-ribosyl)imidazole-4-carboxamide + L-glutamate + H(+). Its pathway is amino-acid biosynthesis; L-histidine biosynthesis; L-histidine from 5-phospho-alpha-D-ribose 1-diphosphate: step 5/9. IGPS catalyzes the conversion of PRFAR and glutamine to IGP, AICAR and glutamate. The HisF subunit catalyzes the cyclization activity that produces IGP and AICAR from PRFAR using the ammonia provided by the HisH subunit. The chain is Imidazole glycerol phosphate synthase subunit HisF from Exiguobacterium sibiricum (strain DSM 17290 / CCUG 55495 / CIP 109462 / JCM 13490 / 255-15).